The following is a 401-amino-acid chain: MKIDPVELTKKLISFKSITPRDDGAIEHIAAILEKSGFDCEILEFGDNKTKVKNLYAKYINGVQNLCFAGHVDVVPPGQLKDWISDPFSPEVRDGLLYGRGATDMKSGIAAFITAMVDLVAEKFRFNGSISALITSAEESTEEYGTKAVLKWMESKHKKIDYCVVAEPTSSEKLGDTIKIGRRGSATFELICHGKQGHVAYPDLADNPIYKMISILNRIKDTTFDGGNKYFQPSNCEITTIDVGNSTDNVILDSITAGFNIRYNNMQTPDGLYKLIDEICFSVTNDYKLSMHSSRGAFLSTPDRNTDVMFDAINKVTNIDAVLATSGGTSDAAFIKDVCPVIEFGMINKTSHQVNECVLVNDIHKLTAIYKEFIKSYFYPTNRILNQINVIGNVPDSPLLA.

His71 contributes to the Zn(2+) binding site. Residue Asp73 is part of the active site. Asp104 contributes to the Zn(2+) binding site. Glu138 acts as the Proton acceptor in catalysis. 3 residues coordinate Zn(2+): Glu139, Glu167, and His352.

Belongs to the peptidase M20A family. DapE subfamily. In terms of assembly, homodimer. It depends on Zn(2+) as a cofactor. Requires Co(2+) as cofactor.

The enzyme catalyses N-succinyl-(2S,6S)-2,6-diaminopimelate + H2O = (2S,6S)-2,6-diaminopimelate + succinate. The protein operates within amino-acid biosynthesis; L-lysine biosynthesis via DAP pathway; LL-2,6-diaminopimelate from (S)-tetrahydrodipicolinate (succinylase route): step 3/3. Functionally, catalyzes the hydrolysis of N-succinyl-L,L-diaminopimelic acid (SDAP), forming succinate and LL-2,6-diaminopimelate (DAP), an intermediate involved in the bacterial biosynthesis of lysine and meso-diaminopimelic acid, an essential component of bacterial cell walls. This is Succinyl-diaminopimelate desuccinylase from Wolbachia sp. subsp. Brugia malayi (strain TRS).